We begin with the raw amino-acid sequence, 377 residues long: Homoserine O-succinyltransferase (377 aa).

The AB hydrolase-1 domain occupies 45 to 356; it reads NAVLVCHALN…PHGHDAFLLD (312 aa). The Nucleophile role is filled by serine 151. Arginine 221 contributes to the substrate binding site. Residues aspartate 317 and histidine 350 contribute to the active site. Position 351 (aspartate 351) interacts with substrate.

The protein belongs to the AB hydrolase superfamily. MetX family. Homodimer.

It is found in the cytoplasm. It carries out the reaction L-homoserine + succinyl-CoA = O-succinyl-L-homoserine + CoA. The protein operates within amino-acid biosynthesis; L-methionine biosynthesis via de novo pathway; O-succinyl-L-homoserine from L-homoserine: step 1/1. Functionally, transfers a succinyl group from succinyl-CoA to L-homoserine, forming succinyl-L-homoserine. This chain is Homoserine O-succinyltransferase, found in Leptothrix cholodnii (strain ATCC 51168 / LMG 8142 / SP-6) (Leptothrix discophora (strain SP-6)).